A 308-amino-acid chain; its full sequence is Glutaminase (308 aa).

7 residues coordinate substrate: Ser66, Asn117, Glu161, Asn168, Tyr192, Tyr244, and Val262.

It belongs to the glutaminase family. As to quaternary structure, homotetramer.

The enzyme catalyses L-glutamine + H2O = L-glutamate + NH4(+). This chain is Glutaminase, found in Salmonella choleraesuis (strain SC-B67).